The chain runs to 230 residues: Secretory carrier-associated membrane protein 4 (230 aa).

The Cytoplasmic segment spans residues 1–39 (MAGKENNFPPLPHFLPLKPCFYQDFSDEIPVEHQVLVKR). A run of 4 helical transmembrane segments spans residues 40-60 (IYRLWMFYCTTLGVNLVACLA), 61-81 (WWIAGGAGANFGLAMLWLVLF), 106-126 (MAFFFIFGAQFVLTVIQAIGF), and 149-169 (VVMLIPAIMFSLSAVVMAITI). Residues 170-230 (VKVHRIYRGA…SYSTSGSQWP (61 aa)) lie on the Cytoplasmic side of the membrane. T194 is modified (phosphothreonine). Residues 197–230 (NPPSREAQFNSFSGNSLPEYPTVPSYSTSGSQWP) are disordered. Composition is skewed to polar residues over residues 203 to 212 (AQFNSFSGNS) and 220 to 230 (PSYSTSGSQWP).

Belongs to the SCAMP family.

The protein localises to the membrane. Functionally, probably involved in membrane protein trafficking. The sequence is that of Secretory carrier-associated membrane protein 4 (Scamp4) from Rattus norvegicus (Rat).